The chain runs to 353 residues: MKIADIKAFLGRYFDPVELVGTGDIEIVGPAKIEEASTGHVSFVANEKYYRYIAQTGASLVIVSQKAPLDDASPGTSFLKVADPYTAFVFILQHFSGKRRIADTGIAASASVAASVRLGENVSLGEHVVIGENCVIGDGTVIGPGTVLMDGVTVGSGCTIFPLVTIYDGTVIGDRVTIHSGTVVGADGFGFAPQKDGSYIKIPQMGTVEIGDDVEIGANTTIDRATMGATVIEKGAKIDNLVQIAHNCRIGGDTVIASQAGISGSVKIGRQCLIGGQAGFAGHLELADRTSVAAKAGISKSFLEPGLAIRGVPAQPMRDQLRQEAQVRGLGEMKSKLEALEAKLLALQQQLGE.

H246 (proton acceptor) is an active-site residue.

It belongs to the transferase hexapeptide repeat family. LpxD subfamily. In terms of assembly, homotrimer.

The enzyme catalyses a UDP-3-O-[(3R)-3-hydroxyacyl]-alpha-D-glucosamine + a (3R)-hydroxyacyl-[ACP] = a UDP-2-N,3-O-bis[(3R)-3-hydroxyacyl]-alpha-D-glucosamine + holo-[ACP] + H(+). It participates in bacterial outer membrane biogenesis; LPS lipid A biosynthesis. Functionally, catalyzes the N-acylation of UDP-3-O-acylglucosamine using 3-hydroxyacyl-ACP as the acyl donor. Is involved in the biosynthesis of lipid A, a phosphorylated glycolipid that anchors the lipopolysaccharide to the outer membrane of the cell. The polypeptide is UDP-3-O-acylglucosamine N-acyltransferase (Chlorobaculum tepidum (strain ATCC 49652 / DSM 12025 / NBRC 103806 / TLS) (Chlorobium tepidum)).